The chain runs to 1009 residues: Type VII secretion system accessory factor EsaA (1009 aa).

Helical transmembrane passes span 7 to 27, 822 to 842, 869 to 889, 903 to 923, 928 to 948, and 979 to 999; these read IYAL…IFFV, ISPT…AYIF, AITS…VGLI, KFIL…TYLL, SIGM…MNNL, and IGLA…LNMF.

Belongs to the EsaA family. Homodimer. Interacts with EssB.

It localises to the cell membrane. In terms of biological role, component of the type VII secretion system (Ess). Provides together with EssB and other components such as EssC and EssE a secretion platform across the cytoplasmic membrane in the host. This Staphylococcus aureus (strain MRSA252) protein is Type VII secretion system accessory factor EsaA.